A 187-amino-acid chain; its full sequence is Elongation factor P (187 aa).

The protein belongs to the elongation factor P family.

The protein resides in the cytoplasm. The protein operates within protein biosynthesis; polypeptide chain elongation. Involved in peptide bond synthesis. Stimulates efficient translation and peptide-bond synthesis on native or reconstituted 70S ribosomes in vitro. Probably functions indirectly by altering the affinity of the ribosome for aminoacyl-tRNA, thus increasing their reactivity as acceptors for peptidyl transferase. This is Elongation factor P from Nocardioides sp. (strain ATCC BAA-499 / JS614).